A 162-amino-acid chain; its full sequence is Globin CTT-VIIB-7 (162 aa).

The N-terminal stretch at 1–16 is a signal peptide; it reads MKFFAVLALCVVGAIA. The Globin domain maps to 18-162; that stretch reads PLSADEANLV…TYAVALKSLE (145 aa). Heme b is bound by residues H76 and H111.

It belongs to the globin family. Homodimer.

The sequence is that of Globin CTT-VIIB-7 (CTT-7B7) from Chironomus thummi piger (Midge).